The sequence spans 453 residues: Frizzled/smoothened-like sans CRD protein G (453 aa).

The signal sequence occupies residues M1–S24. Residues Q25–K89 are Extracellular-facing. N-linked (GlcNAc...) asparagine glycosylation is found at N49 and N67. The chain crosses the membrane as a helical span at residues F90–I110. Topologically, residues T111 to T124 are cytoplasmic. The helical transmembrane segment at I125–F145 threads the bilayer. Topologically, residues G146 to C170 are extracellular. Residue N148 is glycosylated (N-linked (GlcNAc...) asparagine). The helical transmembrane segment at L171–L191 threads the bilayer. Residues S192–K209 are Cytoplasmic-facing. The helical transmembrane segment at Y210–D230 threads the bilayer. Over Q231–L250 the chain is Extracellular. Residues I251–I271 traverse the membrane as a helical segment. Residues L272–L296 are Cytoplasmic-facing. A helical membrane pass occupies residues C297 to I317. Residues E318–N352 are Extracellular-facing. The helical transmembrane segment at E353 to I373 threads the bilayer. Over N374–K453 the chain is Cytoplasmic.

It belongs to the G-protein coupled receptor Fz/Smo family.

The protein localises to the membrane. The sequence is that of Frizzled/smoothened-like sans CRD protein G (fscG) from Dictyostelium discoideum (Social amoeba).